We begin with the raw amino-acid sequence, 273 residues long: Programmed cell death 1 ligand 2 (273 aa).

Residues 1–19 (MIFLLLMLSLELQLHQIAA) form the signal peptide. The Extracellular portion of the chain corresponds to 20-220 (LFTVTVPKEL…SQMEPRTHPT (201 aa)). One can recognise an Ig-like V-type domain in the interval 21–118 (FTVTVPKELY…AWDYKYLTLK (98 aa)). Residues Asn37, Asn64, Asn157, Asn163, and Asn189 are each glycosylated (N-linked (GlcNAc...) asparagine). Disulfide bonds link Cys42/Cys102 and Cys143/Cys192. The 82-residue stretch at 122–203 (SYRKINTHIL…FWNTHVRELT (82 aa)) folds into the Ig-like C2-type domain. The helical transmembrane segment at 221 to 241 (WLLHIFIPFCIIAFIFIATVI) threads the bilayer. Residues 242–273 (ALRKQLCQKLYSSKDTTKRPVTTTKREVNSAI) lie on the Cytoplasmic side of the membrane.

This sequence belongs to the immunoglobulin superfamily. BTN/MOG family. Interacts with PDCD1. As to expression, highly expressed in heart, placenta, pancreas, lung and liver and weakly expressed in spleen, lymph nodes and thymus.

It localises to the secreted. The protein localises to the endomembrane system. Its subcellular location is the cell membrane. Its function is as follows. Involved in the costimulatory signal, essential for T-cell proliferation and IFNG production in a PDCD1-independent manner. Interaction with PDCD1 inhibits T-cell proliferation by blocking cell cycle progression and cytokine production. In Homo sapiens (Human), this protein is Programmed cell death 1 ligand 2 (PDCD1LG2).